Reading from the N-terminus, the 238-residue chain is MIAFIVLLSLAAVLQQSSGTVDFASESSNKRENQKQIVDKHNALRRSVRPTARNMLQMEWNSNAAQNAKRWADRCSFAHSPPHLRTVGKIGCGENLFMSSQPYAWSRVIQSWYDENKKFVYGVGANPPGSVIGHYTQIVWYNSHLLGCGAAKCSSSKYLYVCQYCPTGNIIGSIATPYKSGPPCGDCPSACVNGLCTNPCKHHNVFSNCQSLAKQNACQTEWMKSKCAASCFCRTEII.

The signal sequence occupies residues Met-1 to Gly-19. One can recognise an SCP domain in the interval Val-38–Tyr-164. Intrachain disulfides connect Cys-75/Cys-153, Cys-92/Cys-165, Cys-148/Cys-162, Cys-184/Cys-191, Cys-187/Cys-196, Cys-200/Cys-233, Cys-209/Cys-227, and Cys-218/Cys-231. Residues Cys-200–Cys-233 form the ShKT domain.

Expressed by the venom gland.

It is found in the secreted. In terms of biological role, inhibits carbachol-induced muscle contraction and weakly blocks muscle contraction evoked by potassium. The sequence is that of Cysteine-rich venom protein natrin-2 from Naja atra (Chinese cobra).